The chain runs to 79 residues: Cytochrome c oxidase assembly factor 6 homolog (79 aa).

Positions Arg9–Phe52 constitute a CHCH domain. Residues Cys12–Cys22 carry the Cx9C motif motif. Cystine bridges form between Cys12/Cys44 and Cys22/Cys33. Positions Cys33 to Cys44 match the Cx10C motif motif.

This sequence belongs to the cytochrome c oxidase subunit 6B family. As to quaternary structure, found in a complex with TMEM177, COX20, MT-CO2/COX2, COX18, SCO1 and SCO2. Interacts with COA1, MT-CO2/COX2, SCO1, SCO2 and COX20. Interacts with COX20 in a MT-CO2/COX2- and COX18-dependent manner. Interacts with COX16.

Its subcellular location is the mitochondrion. The protein localises to the mitochondrion intermembrane space. In terms of biological role, involved in the maturation of the mitochondrial respiratory chain complex IV subunit MT-CO2/COX2. Thereby, may regulate early steps of complex IV assembly. Mitochondrial respiratory chain complex IV or cytochrome c oxidase is the component of the respiratory chain that catalyzes the transfer of electrons from intermembrane space cytochrome c to molecular oxygen in the matrix and as a consequence contributes to the proton gradient involved in mitochondrial ATP synthesis. May also be required for efficient formation of respiratory supercomplexes comprised of complexes III and IV. This is Cytochrome c oxidase assembly factor 6 homolog (Coa6) from Mus musculus (Mouse).